We begin with the raw amino-acid sequence, 584 residues long: tRNA-guanine(15) transglycosylase (584 aa).

Catalysis depends on Asp-95, which acts as the Nucleophile. Substrate is bound by residues Asp-130 and Gly-196. Positions 279, 281, and 284 each coordinate Zn(2+). In terms of domain architecture, PUA spans 507 to 582 (RMRVVVSEEA…RAVKVRRGIS (76 aa)).

It belongs to the archaeosine tRNA-ribosyltransferase family. The cofactor is Zn(2+).

It carries out the reaction guanosine(15) in tRNA + 7-cyano-7-deazaguanine = 7-cyano-7-carbaguanosine(15) in tRNA + guanine. It functions in the pathway tRNA modification; archaeosine-tRNA biosynthesis. In terms of biological role, exchanges the guanine residue with 7-cyano-7-deazaguanine (preQ0) at position 15 in the dihydrouridine loop (D-loop) of archaeal tRNAs. The chain is tRNA-guanine(15) transglycosylase from Pyrococcus abyssi (strain GE5 / Orsay).